A 126-amino-acid polypeptide reads, in one-letter code: Large ribosomal subunit protein uL22 (126 aa).

Belongs to the universal ribosomal protein uL22 family. Part of the 50S ribosomal subunit.

Functionally, this protein binds specifically to 23S rRNA; its binding is stimulated by other ribosomal proteins, e.g. L4, L17, and L20. It is important during the early stages of 50S assembly. It makes multiple contacts with different domains of the 23S rRNA in the assembled 50S subunit and ribosome. In terms of biological role, the globular domain of the protein is located near the polypeptide exit tunnel on the outside of the subunit, while an extended beta-hairpin is found that lines the wall of the exit tunnel in the center of the 70S ribosome. This chain is Large ribosomal subunit protein uL22, found in Paracoccus denitrificans (strain Pd 1222).